The sequence spans 170 residues: M-agglutinin (170 aa).

An N-terminal signal peptide occupies residues 1–24 (MNLKKIAIASSVFAGITMALTCHA).

Functionally, this protein is a non-fimbrial hemagglutinin that is specific for blood group M. This Escherichia coli protein is M-agglutinin (bmaE).